A 69-amino-acid chain; its full sequence is Toxin Tz2 (69 aa).

A signal peptide spans 1–7 (IEVVMGG). The LCN-type CS-alpha/beta domain occupies 8–69 (KEGYLLDKSN…KMWDLKTNKC (62 aa)). 4 disulfide bridges follow: Cys19-Cys69, Cys23-Cys45, Cys31-Cys50, and Cys35-Cys52.

The protein belongs to the long (4 C-C) scorpion toxin superfamily. Sodium channel inhibitor family. Beta subfamily. Expressed by the venom gland.

The protein resides in the secreted. Beta toxins bind voltage-independently at site-4 of sodium channels (Nav) and shift the voltage of activation toward more negative potentials thereby affecting sodium channel activation and promoting spontaneous and repetitive firing. The protein is Toxin Tz2 of Tityus zulianus (Venezuelan scorpion).